We begin with the raw amino-acid sequence, 223 residues long: Glycosylphosphatidylinositol anchor biosynthesis protein 11 (223 aa).

6 helical membrane-spanning segments follow: residues 25–45, 52–72, 88–108, 120–140, 158–178, and 189–209; these read LAVV…SAGI, VMTQ…VVVL, MIAA…LVLF, FVCA…TYHL, VYAA…PIPY, and ITIL…GIAL.

Belongs to the PIGF family.

It is found in the endoplasmic reticulum membrane. It functions in the pathway glycolipid biosynthesis; glycosylphosphatidylinositol-anchor biosynthesis. Acts in the GPI biosynthetic pathway between GlcNAc-PI synthesis and GPI transfer to protein. This Yarrowia lipolytica (strain CLIB 122 / E 150) (Yeast) protein is Glycosylphosphatidylinositol anchor biosynthesis protein 11 (GPI11).